Here is a 310-residue protein sequence, read N- to C-terminus: Beta-carotene 3-hydroxylase 1, chloroplastic (310 aa).

Residues 1 to 51 constitute a chloroplast transit peptide; that stretch reads MAAGLSTAVTFKPLHRSFSSSSTDFRLRLPKSLSGFSPSLRFKRFSVCYVV. Transmembrane regions (helical) follow at residues 98–118 and 132–152; these read YLIA…MAVY and MLEM…MEFW. Residues 145–272 form the Fatty acid hydroxylase domain; it reads AAVGMEFWAR…KFNGVPYGLF (128 aa). The Histidine box-1 motif lies at 157-162; it reads HRALWH. The short motif at 169 to 173 is the Histidine box-2 element; sequence HESHH. 2 consecutive transmembrane segments (helical) span residues 183–203 and 208–228; these read NDVF…YGFF and VPGL…AYMF. Positions 230–235 match the Histidine box-3 motif; it reads HDGLVH. A Histidine box-4 motif is present at residues 256–260; it reads HQLHH.

This sequence belongs to the sterol desaturase family. Homodimer. In terms of tissue distribution, expressed in leaves, flowers, stems, roots and siliques.

It localises to the plastid. The protein resides in the chloroplast membrane. It carries out the reaction all-trans-beta-carotene + 4 reduced [2Fe-2S]-[ferredoxin] + 2 O2 + 4 H(+) = all-trans-zeaxanthin + 4 oxidized [2Fe-2S]-[ferredoxin] + 2 H2O. Its function is as follows. Nonheme diiron monooxygenase involved in the biosynthesis of xanthophylls. Specific for beta-ring hydroxylations of beta-carotene. Also has a low activity toward the beta- and epsilon-rings of alpha-carotene. No activity with acyclic carotenoids such as lycopene and neurosporene. Uses ferredoxin as an electron donor. The polypeptide is Beta-carotene 3-hydroxylase 1, chloroplastic (BETA-OHASE 1) (Arabidopsis thaliana (Mouse-ear cress)).